A 581-amino-acid chain; its full sequence is MSHSDYNFDIEQNAFEKEAPKVSIERKGDVVEEEVIATGEVENYAEPKSRNFLQRFFDDFKPALTTRGDGVALKRKLTSRHMQMISVGGAIGSGLYVGSGSAFADGGPASVIINYILIGIMMIFVIYALGELAIAYPVAGSFNTYATRFIDPAWGFAVSWNYFLNYFVTCPLELTTCAITFKFWTEINSAAWISIFLAVVIVINLFGVRAYGEVEFILSTIKVIATVGFIILAIIINCGGVPTDHRGYIGGSIIKQKPFRHGFKGFCSVFTTAAFSFSGTEIIGLAAAEVGNPRKSVPSAVKQVFWRIAIFYVVSLILIGLLVSPDDPRLMGNGDVSVSPFVLAIQEANIKGLPSVFNAVIIISVVSVTNSTTYTAARTLQGMATLKQAPKFFSYTDRVGRPLIAMVVVLLFGFFAYINEADKNGSDISDTVFDWLLAISGLSSFFTWGSICLSHIMFRLAFKKQGHSLKELGFVSPMGIWGSVIGLGFNILCLMAEFYVSLFLIGGSPNANDFFQGYLAACIALAFFIGYKIYDRSHIPSLDKLDIDTGLKTYDNQDEEKEEYSSKGPLNILKKAWNAVC.

Helical transmembrane passes span 84-104, 109-129, 149-169, 187-207, 216-236, 266-286, 304-324, 348-368, 399-419, 432-452, 485-505, and 514-534; these read MISVGGAIGSGLYVGSGSAFA, ASVIINYILIGIMMIFVIYAL, FIDPAWGFAVSWNYFLNYFVT, INSAAWISIFLAVVIVINLFG, FILSTIKVIATVGFIILAIII, FCSVFTTAAFSFSGTEIIGLA, VFWRIAIFYVVSLILIGLLVS, ANIKGLPSVFNAVIIISVVSV, VGRPLIAMVVVLLFGFFAYIN, VFDWLLAISGLSSFFTWGSIC, IGLGFNILCLMAEFYVSLFLI, and FFQGYLAACIALAFFIGYKIY.

This sequence belongs to the amino acid-polyamine-organocation (APC) superfamily.

It localises to the membrane. This is an uncharacterized protein from Schizosaccharomyces pombe (strain 972 / ATCC 24843) (Fission yeast).